Reading from the N-terminus, the 302-residue chain is Phospho-N-acetylmuramoyl-pentapeptide-transferase (302 aa).

Transmembrane regions (helical) follow at residues 1–21, 42–62, 67–87, 101–121, 123–143, 154–174, 178–198, 204–224, 229–249, and 279–299; these read MIAASFLLNLLIYPFLINLFR, GTPTMGGILFVLIGLLFGVLS, VILTGAFLFFLIGFLDDFLSI, ALLQIAAASVVIAFSQPETAV, FFGIKLEMGAWYYLLALIVIV, GLDGLAGWVYISGAIPYWFFL, GFSENIIILLSAGVLAFLIFN, IFMGDTGSIALGGTLGVVSVL, FYLIVFFPILVVETLSVILQI, and IVAVFTIFNLISSLIALEVFG.

The protein belongs to the glycosyltransferase 4 family. MraY subfamily. Requires Mg(2+) as cofactor.

It is found in the cell inner membrane. The enzyme catalyses UDP-N-acetyl-alpha-D-muramoyl-L-alanyl-gamma-D-glutamyl-meso-2,6-diaminopimeloyl-D-alanyl-D-alanine + di-trans,octa-cis-undecaprenyl phosphate = di-trans,octa-cis-undecaprenyl diphospho-N-acetyl-alpha-D-muramoyl-L-alanyl-D-glutamyl-meso-2,6-diaminopimeloyl-D-alanyl-D-alanine + UMP. Its pathway is cell wall biogenesis; peptidoglycan biosynthesis. Functionally, catalyzes the initial step of the lipid cycle reactions in the biosynthesis of the cell wall peptidoglycan: transfers peptidoglycan precursor phospho-MurNAc-pentapeptide from UDP-MurNAc-pentapeptide onto the lipid carrier undecaprenyl phosphate, yielding undecaprenyl-pyrophosphoryl-MurNAc-pentapeptide, known as lipid I. The polypeptide is Phospho-N-acetylmuramoyl-pentapeptide-transferase (Thermotoga neapolitana (strain ATCC 49049 / DSM 4359 / NBRC 107923 / NS-E)).